The sequence spans 622 residues: Low affinity potassium transport system protein Kup (622 aa).

The next 12 membrane-spanning stretches (helical) occupy residues 9-29 (LPAITLAAIGVVYGDIGTSPL), 49-69 (VFGFLSLIFWLLIFVVSIKYL), 103-123 (VIMGLIGGSFFYGEVVITPAI), 137-157 (PQLDTWIVPLSIVVLTLLFMI), 165-185 (VGKLFAPIMLTWFLILAVLGL), 213-233 (VSFIALGAVVLSITGVEALYA), 247-267 (WFTVVLPSLVLNYFGQGALLL), 276-296 (PFFLLAPDWALIPLLILAALA), 337-357 (IYIPFVNWLLYFAVVVVIVSF), 363-383 (LAAAYGIAVTGTMVLTSILST), 396-416 (LVALILVAFLCVDIPLFSANL), and 419-439 (LLSGGWLPLSLGLIMFTIMTT).

The protein belongs to the HAK/KUP transporter (TC 2.A.72) family.

Its subcellular location is the cell inner membrane. It catalyses the reaction K(+)(in) + H(+)(in) = K(+)(out) + H(+)(out). In terms of biological role, responsible for the low-affinity transport of potassium into the cell. Likely operates as a K(+):H(+) symporter. This chain is Low affinity potassium transport system protein Kup, found in Salmonella arizonae (strain ATCC BAA-731 / CDC346-86 / RSK2980).